Here is a 468-residue protein sequence, read N- to C-terminus: ATP synthase subunit beta (468 aa).

ATP is bound at residue 155–162 (GGAGVGKT).

This sequence belongs to the ATPase alpha/beta chains family. As to quaternary structure, F-type ATPases have 2 components, CF(1) - the catalytic core - and CF(0) - the membrane proton channel. CF(1) has five subunits: alpha(3), beta(3), gamma(1), delta(1), epsilon(1). CF(0) has three main subunits: a(1), b(2) and c(9-12). The alpha and beta chains form an alternating ring which encloses part of the gamma chain. CF(1) is attached to CF(0) by a central stalk formed by the gamma and epsilon chains, while a peripheral stalk is formed by the delta and b chains.

Its subcellular location is the cell membrane. It carries out the reaction ATP + H2O + 4 H(+)(in) = ADP + phosphate + 5 H(+)(out). Functionally, produces ATP from ADP in the presence of a proton gradient across the membrane. The catalytic sites are hosted primarily by the beta subunits. This is ATP synthase subunit beta from Streptococcus thermophilus (strain ATCC BAA-250 / LMG 18311).